The chain runs to 600 residues: Elongation factor 4 (600 aa).

Residues 5-187 (SRIRNFSIIA…DLIKKIPPPK (183 aa)) form the tr-type G domain. Residues 17-22 (DHGKST) and 134-137 (NKMD) each bind GTP.

Belongs to the TRAFAC class translation factor GTPase superfamily. Classic translation factor GTPase family. LepA subfamily.

The protein localises to the cell inner membrane. It carries out the reaction GTP + H2O = GDP + phosphate + H(+). Functionally, required for accurate and efficient protein synthesis under certain stress conditions. May act as a fidelity factor of the translation reaction, by catalyzing a one-codon backward translocation of tRNAs on improperly translocated ribosomes. Back-translocation proceeds from a post-translocation (POST) complex to a pre-translocation (PRE) complex, thus giving elongation factor G a second chance to translocate the tRNAs correctly. Binds to ribosomes in a GTP-dependent manner. The chain is Elongation factor 4 from Marinobacter nauticus (strain ATCC 700491 / DSM 11845 / VT8) (Marinobacter aquaeolei).